Consider the following 350-residue polypeptide: UDP-glucose 4-epimerase (350 aa).

7–38 (KILVTGSAGFIGTHTVVQLLNNGFNVSIIDNF) contacts NAD(+). S133 serves as a coordination point for substrate. The active-site Proton acceptor is the Y157.

The protein belongs to the NAD(P)-dependent epimerase/dehydratase family. NAD(+) is required as a cofactor.

The catalysed reaction is UDP-alpha-D-glucose = UDP-alpha-D-galactose. It functions in the pathway carbohydrate metabolism; galactose metabolism. The chain is UDP-glucose 4-epimerase (GALE) from Pisum sativum (Garden pea).